We begin with the raw amino-acid sequence, 449 residues long: SWI/SNF chromatin-remodeling accessory subunit 2 (449 aa).

The span at 1–11 (MHSQQRPNPQM) shows a compositional bias: polar residues. Residues 1–56 (MHSQQRPNPQMNRHPYGTPGSAPQMRRPGGFAGQPPQMHGPRMVAPPAAPLPKKKK) form a disordered region. The SWIB/MDM2 domain maps to 223-300 (NHPAKFKLHP…PNKLHQLLQQ (78 aa)).

The protein belongs to the SMARCD family. In terms of assembly, component of the multiprotein chromatin-remodeling complexes SWI/SNF: SWI/SNF-A (BAF), SWI/SNF-B (PBAF) and related complexes. The canonical complex contains a catalytic subunit swsn-4, core subunits swsn-1 and swsn-5, and accessory subunits swsn-3, swsn-6, phf-10, dpff-1, swsn-9 and either ham-3/swsn-2.1 or swsn-2.2.

It localises to the nucleus. The protein resides in the nucleoplasm. The protein localises to the chromosome. Its subcellular location is the nucleus envelope. Its function is as follows. Involved in transcriptional activation and repression of select genes by chromatin remodeling (alteration of DNA-nucleosome topology). Component of SWI/SNF chromatin remodeling complexes that carry out key enzymatic activities, changing chromatin structure by altering DNA-histone contacts within a nucleosome in an ATP-dependent manner. Probably regulates vulva development through the let-60/Ras pathway. Involved in nuclear reassembly after mitosis and recruitment of nuclear envelope protein, mel-28, to the nuclear periphery in the early embryo and in the adult germline. Involved in gonadogenesis. The polypeptide is SWI/SNF chromatin-remodeling accessory subunit 2 (Caenorhabditis elegans).